The primary structure comprises 476 residues: Sulfite exporter TauE/SafE family protein 3 (476 aa).

The next 12 helical transmembrane spans lie at 8–28 (WLGL…FAFV), 76–92 (FNWQ…FGAA), 99–115 (VGGG…IIGF), 120–142 (ATAI…NLRL), 151–171 (IIDY…ISIG), 172–192 (VAFN…VLFL), 257–277 (VYWK…ALQI), 291–311 (VINL…AVAL), 339–359 (FGII…FIMG), 360–380 (PLFL…TFAM), 397–417 (FPVP…WVGQ), and 433–453 (IIFI…GVGI).

Belongs to the 4-toluene sulfonate uptake permease (TSUP) (TC 2.A.102) family.

It localises to the membrane. The protein is Sulfite exporter TauE/SafE family protein 3 of Arabidopsis thaliana (Mouse-ear cress).